Reading from the N-terminus, the 960-residue chain is Semaphorin-6C (960 aa).

Positions 1-23 (MPRAPHSMPLLLLLLLSLPQAQT) are cleaved as a signal peptide. At 24–635 (AFPQDPIPLL…ASASRSIPIP (612 aa)) the chain is on the extracellular side. The 487-residue stretch at 29-515 (PIPLLTSDLQ…FPGCIVYLSL (487 aa)) folds into the Sema domain. Asn-69 carries an N-linked (GlcNAc...) asparagine glycan. 4 disulfide bridges follow: Cys-110/Cys-120, Cys-138/Cys-147, Cys-261/Cys-372, and Cys-286/Cys-331. Asn-285 is a glycosylation site (N-linked (GlcNAc...) asparagine). The N-linked (GlcNAc...) asparagine glycan is linked to Asn-436. Intrachain disulfides connect Cys-478–Cys-509, Cys-518–Cys-536, Cys-524–Cys-569, and Cys-528–Cys-544. Residues 555-624 (VDLTGNQESM…HTQGVRRDLS (70 aa)) form a disordered region. A helical transmembrane segment spans residues 636-656 (LLLACVAAAFALGASVSGLLV). Topologically, residues 657–960 (SCACRRANRR…PAPHGSHFNF (304 aa)) are cytoplasmic. 3 disordered regions span residues 685 to 725 (LARL…SPPE), 745 to 792 (ASGG…PGQE), and 806 to 960 (HGPQ…HFNF). Positions 899–909 (RVPSGGPSRYS) are enriched in low complexity. The span at 922–935 (PDGHRGRSLKRVDV) shows a compositional bias: basic and acidic residues. A compositionally biased stretch (pro residues) spans 940-952 (SPKPPLATPPQPA).

Belongs to the semaphorin family. In terms of tissue distribution, expressed in many regions of the developing nervous system, probably in neurons and their precursors, but also in nonneural tissue such as immature muscle and dermis. In adult, strong expression in the skeletal muscle and moderate expression in the brain, where cerebellum shows the highest expression. Also expressed in almost all areas of the CNS.

The protein localises to the cell membrane. In terms of biological role, shows growth cone collapsing activity on dorsal root ganglion (DRG) neurons in vitro. May be a stop signal for the DRG neurons in their target areas, and possibly also for other neurons. May also be involved in the maintenance and remodeling of neuronal connections. The protein is Semaphorin-6C (Sema6c) of Rattus norvegicus (Rat).